Reading from the N-terminus, the 153-residue chain is MFTESMLFLLLFLLLGLIAKNNSLIIAVAVVILLKLFHVDGKVMEIIQAKGINWGVTIITVAILIPIATGQIGFKDLIDSFKSAAGWIGLGAGIAVSILAKKGVGYMAVDPQVTVSLVFGTILAVVLFRGIAAGPVIAAGIAYMAMQLVAFIK.

Helical transmembrane passes span 6–26 (MLFL…SLII), 54–74 (WGVT…QIGF), 80–100 (SFKS…SILA), and 117–137 (LVFG…GPVI).

It belongs to the UPF0756 family.

It is found in the cell membrane. This is UPF0756 membrane protein lmo1568 from Listeria monocytogenes serovar 1/2a (strain ATCC BAA-679 / EGD-e).